The sequence spans 194 residues: Flavin prenyltransferase UbiX (194 aa).

FMN-binding positions include 9–11 (GAS), serine 35, 86–89 (SIKT), and arginine 121. Tyrosine 151 and lysine 167 together coordinate dimethylallyl phosphate.

The protein belongs to the UbiX/PAD1 family.

It carries out the reaction dimethylallyl phosphate + FMNH2 = prenylated FMNH2 + phosphate. Its function is as follows. Involved in the carboxylation of phenylphosphate. In terms of biological role, flavin prenyltransferase that catalyzes the synthesis of the prenylated FMN cofactor (prenyl-FMN) for 4-hydroxy-3-polyprenylbenzoic acid decarboxylase UbiD. The prenyltransferase is metal-independent and links a dimethylallyl moiety from dimethylallyl monophosphate (DMAP) to the flavin N5 and C6 atoms of FMN. The polypeptide is Flavin prenyltransferase UbiX (Thauera aromatica).